A 665-amino-acid polypeptide reads, in one-letter code: Coiled-coil domain-containing protein 138 (665 aa).

Position 48 is a phosphothreonine (Thr-48). Residue Ser-49 is modified to Phosphoserine. Residues 198–323 (QQKFAEELQK…YEFMTIQRLK (126 aa)) adopt a coiled-coil conformation. Ser-469 is subject to Phosphoserine.

The protein is Coiled-coil domain-containing protein 138 (CCDC138) of Macaca fascicularis (Crab-eating macaque).